A 76-amino-acid chain; its full sequence is Small ribosomal subunit protein bS18 (76 aa).

It belongs to the bacterial ribosomal protein bS18 family. As to quaternary structure, part of the 30S ribosomal subunit. Forms a tight heterodimer with protein bS6.

Functionally, binds as a heterodimer with protein bS6 to the central domain of the 16S rRNA, where it helps stabilize the platform of the 30S subunit. The protein is Small ribosomal subunit protein bS18 of Carboxydothermus hydrogenoformans (strain ATCC BAA-161 / DSM 6008 / Z-2901).